A 594-amino-acid polypeptide reads, in one-letter code: NADH-quinone oxidoreductase subunit C/D (594 aa).

The interval 1-185 (MTTGSALYIP…DPFSLNLAKQ (185 aa)) is NADH dehydrogenase I subunit C. The NADH dehydrogenase I subunit D stretch occupies residues 209 to 594 (DYMFLNLGPN…IDFVMADVDR (386 aa)).

It in the N-terminal section; belongs to the complex I 30 kDa subunit family. The protein in the C-terminal section; belongs to the complex I 49 kDa subunit family. NDH-1 is composed of 13 different subunits. Subunits NuoB, CD, E, F, and G constitute the peripheral sector of the complex.

It localises to the cell inner membrane. The enzyme catalyses a quinone + NADH + 5 H(+)(in) = a quinol + NAD(+) + 4 H(+)(out). In terms of biological role, NDH-1 shuttles electrons from NADH, via FMN and iron-sulfur (Fe-S) centers, to quinones in the respiratory chain. The immediate electron acceptor for the enzyme in this species is believed to be ubiquinone. Couples the redox reaction to proton translocation (for every two electrons transferred, four hydrogen ions are translocated across the cytoplasmic membrane), and thus conserves the redox energy in a proton gradient. This is NADH-quinone oxidoreductase subunit C/D from Pseudomonas fluorescens (strain Pf0-1).